The chain runs to 139 residues: Putative pre-16S rRNA nuclease (139 aa).

The protein belongs to the YqgF nuclease family.

It is found in the cytoplasm. In terms of biological role, could be a nuclease involved in processing of the 5'-end of pre-16S rRNA. The protein is Putative pre-16S rRNA nuclease of Streptococcus uberis (strain ATCC BAA-854 / 0140J).